The chain runs to 400 residues: Enoyl-[acyl-carrier-protein] reductase [NADH] 1 (400 aa).

NAD(+) is bound by residues 48–53, 74–75, 111–112, and 139–140; these read GSSSGY, FE, DA, and LA. Tyr225 lines the substrate pocket. The active-site Proton donor is the Tyr235. Residues Lys244 and 273–275 each bind NAD(+); that span reads VVT.

It belongs to the TER reductase family. In terms of assembly, monomer.

The enzyme catalyses a 2,3-saturated acyl-[ACP] + NAD(+) = a (2E)-enoyl-[ACP] + NADH + H(+). It participates in lipid metabolism; fatty acid biosynthesis. In terms of biological role, involved in the final reduction of the elongation cycle of fatty acid synthesis (FAS II). Catalyzes the reduction of a carbon-carbon double bond in an enoyl moiety that is covalently linked to an acyl carrier protein (ACP). The protein is Enoyl-[acyl-carrier-protein] reductase [NADH] 1 of Photobacterium profundum (strain SS9).